The following is a 35-amino-acid chain: Sperm protamine alpha isoform 1 (35 aa).

The segment at 1–35 is disordered; that stretch reads MPRRRRRASRPVRRRRRARRSTAVRRRRRVVRRRR. Serine 9 and serine 21 each carry phosphoserine.

Post-translationally, phosphorylated in immature sperm. Dephosphorylated in mature sperm allowing a stronger interaction with DNA. As to expression, gonads.

It localises to the nucleus. The protein resides in the chromosome. Functionally, protamines substitute for histones in the chromatin of sperm during the haploid phase of spermatogenesis. They compact sperm DNA into a highly condensed, stable and inactive complex. The chain is Sperm protamine alpha isoform 1 from Scomber scombrus (Atlantic mackerel).